The chain runs to 489 residues: DBIRD complex subunit ZNF326 (489 aa).

Disordered stretches follow at residues 1 to 28 (MDREYGSYNQRSMDSYGNQSYSVDEMGD), 62 to 100 (EQGHFGDSYDGRYENPYRNSVDSFEGRSQGGSSWDPSFT), 133 to 181 (VGSR…RPGL), and 205 to 263 (PPFK…KNSE). Polar residues predominate over residues 7–22 (SYNQRSMDSYGNQSYS). The segment covering 62-76 (EQGHFGDSYDGRYEN) has biased composition (basic and acidic residues). Residues 91–100 (GGSSWDPSFT) show a composition bias toward polar residues. The short motif at 200 to 221 (KRKMAPPFKPVGVFGKKQKLSK) is the Bipartite nuclear localization signal element. 2 consecutive C2H2 AKAP95-type zinc fingers follow at residues 273 to 295 (CSFCKFRSFDEKGIEEHLSSTTH) and 365 to 388 (CSACSVYVPALHSSVQLHLKSADH). The segment at 431–489 (ETQPEEQQQEQEEEEEEEEQQEQAAVPEQDLSEEQPAAIAAEPEGEDFTCDPLTTTDEV) is disordered. Over residues 433–451 (QPEEQQQEQEEEEEEEEQQ) the composition is skewed to acidic residues.

It belongs to the AKAP95 family. As to quaternary structure, component of the DBIRD complex.

It localises to the nucleus. Functionally, core component of the DBIRD complex, a multiprotein complex that acts at the interface between core mRNP particles and RNA polymerase II (RNAPII) and integrates transcript elongation with the regulation of alternative splicing. The sequence is that of DBIRD complex subunit ZNF326 (znf326) from Xenopus tropicalis (Western clawed frog).